We begin with the raw amino-acid sequence, 1466 residues long: Helicase ARIP4 (1466 aa).

2 disordered regions span residues 1–137 (MSDE…ERRK) and 185–235 (DSSS…THVN). Positions 11-49 (PDLDPDVELEDEEEEEEEEEVAVEEHDRDDEEGLLDDTS) are enriched in acidic residues. Low complexity predominate over residues 72 to 82 (TSTTSSQSEPS). Basic residues predominate over residues 99 to 114 (KKRAQKPSHMRRNIRK). Glycyl lysine isopeptide (Lys-Gly) (interchain with G-Cter in SUMO2) cross-links involve residues K114 and K126. The span at 191–200 (EDEKSSRDEV) shows a compositional bias: basic and acidic residues. K271 participates in a covalent cross-link: Glycyl lysine isopeptide (Lys-Gly) (interchain with G-Cter in SUMO2). The Helicase ATP-binding domain maps to 291–511 (RFKTSSGFGC…WCMVDFVRPD (221 aa)). 304–311 (HSMGLGKT) contacts ATP. A DEAH box motif is present at residues 462–465 (DEGH). Residues 550–554 (LHSLL) carry the LXXLL motif 1 motif. Residues 649-670 (SAGTSARCPPHGTKVKGEDSAL) form a disordered region. Residues K664, K681, K758, K900, K1013, and K1017 each participate in a glycyl lysine isopeptide (Lys-Gly) (interchain with G-Cter in SUMO2) cross-link. The Helicase C-terminal domain occupies 727 to 895 (HLIEESVKLG…RVVDDLNPML (169 aa)). 2 disordered regions span residues 1026 to 1045 (QSTP…GVSS) and 1120 to 1170 (ATGK…VSPD). The span at 1135–1154 (SGSQGPSLASTSNGRHSASS) shows a compositional bias: polar residues. Phosphoserine occurs at positions 1168 and 1171. Disordered regions lie at residues 1184 to 1212 (VAAA…MDNS) and 1259 to 1281 (TPSV…APVQ). A Phosphothreonine modification is found at T1259. Positions 1328–1332 (LSNLL) match the LXXLL motif 2 motif. The disordered stretch occupies residues 1444–1466 (AEVGFSSNDDEDKDDDVIEVTGK). Acidic residues predominate over residues 1451–1466 (NDDEDKDDDVIEVTGK).

It belongs to the SNF2/RAD54 helicase family. In terms of assembly, interacts with AR via its N-terminus. Interacts with DYRK1A. Binds DNA and mononucleosomes, but does not seem to form large multiprotein complexes. Post-translationally, sumoylated. As to expression, expressed at relatively low level, with highest expression in testis, liver and kidney. In brain, it is expressed in hippocampal and cerebellar neurons. In testis, it is present at high level in Sertoli cell nuclei. Also present in Leydig cell (at protein level).

It is found in the nucleus. The catalysed reaction is ATP + H2O = ADP + phosphate + H(+). Its activity is regulated as follows. Enzyme activity is enhanced by dsDNA (double-stranded DNA) and ssDNA (single-stranded DNA). In terms of biological role, DNA helicase that modulates androgen receptor (AR)-dependent transactivation in a promoter-dependent manner. Not able to remodel mononucleosomes in vitro. Acts as an AR-coregulator in Sertoli cells. The sequence is that of Helicase ARIP4 (Rad54l2) from Mus musculus (Mouse).